A 360-amino-acid chain; its full sequence is ELAV-like protein 2 (360 aa).

The interval 1 to 36 (METQLSNGPTCNNTANGPTTVNNNCSSPVDSGNTED) is disordered. 2 consecutive RRM domains span residues 39-117 (TNLI…YARP) and 125-205 (ANLY…FANN). Position 221 is a phosphoserine (serine 221). The RRM 3 domain maps to 277–355 (WCIFVYNLAP…RVLQVSFKTN (79 aa)).

Belongs to the RRM elav family. As to quaternary structure, interacts with IGF2BP1. Interacts with MAP1B light chain LC1. As to expression, brain; neural-specific. Expressed in the hippocampus.

In terms of biological role, RNA-binding protein that binds to the 3' untranslated region (3'UTR) of target mRNAs. Seems to recognize a GAAA motif. Can bind to its own 3'UTR, the FOS 3'UTR and the ID 3'UTR. This Mus musculus (Mouse) protein is ELAV-like protein 2 (Elavl2).